Here is a 320-residue protein sequence, read N- to C-terminus: MTSIPFPGDRLLQVDGVILCGLTHKQAVQCLKGPGQVARLVLERRVPRSTQQCPSANDSMGDERTAVSLVTALPGRPSSCVSVTDGPKFEVKLKKNANGLGFSFVQMEKESCSHLKSDLVRIKRLFPGQPAEENGAIAAGDIILAVNGRSTEGLIFQEVLHLLRGAPQEVTLLLCRPPPGALPEMEQEWQTPELSADKEFTRATCTDSCTSPILDQEDSWRDSASPDAGEGLGLRPESSQKAIREAQWGQNRERPWASSLTHSPESHPHLCKLHQERDESTLATSLEKDVRQNCYSVCDIMRLGRYSFSSPLTRLSTDIF.

PDZ domains are found at residues 1 to 46 (MTSI…ERRV) and 90 to 178 (EVKL…CRPP). The interval 215–239 (DQEDSWRDSASPDAGEGLGLRPESS) is disordered.

The polypeptide is Putative protein FRMPD2-like (Homo sapiens (Human)).